A 143-amino-acid chain; its full sequence is Nucleoside diphosphate kinase (143 aa).

ATP-binding residues include Lys-11, Phe-59, Arg-87, Thr-93, Arg-104, and Asn-114. His-117 acts as the Pros-phosphohistidine intermediate in catalysis.

This sequence belongs to the NDK family. As to quaternary structure, homotetramer. It depends on Mg(2+) as a cofactor.

The protein localises to the cytoplasm. The catalysed reaction is a 2'-deoxyribonucleoside 5'-diphosphate + ATP = a 2'-deoxyribonucleoside 5'-triphosphate + ADP. It catalyses the reaction a ribonucleoside 5'-diphosphate + ATP = a ribonucleoside 5'-triphosphate + ADP. Major role in the synthesis of nucleoside triphosphates other than ATP. The ATP gamma phosphate is transferred to the NDP beta phosphate via a ping-pong mechanism, using a phosphorylated active-site intermediate. This chain is Nucleoside diphosphate kinase, found in Shewanella baltica (strain OS223).